An 820-amino-acid polypeptide reads, in one-letter code: Trimethylamine-N-oxide reductase (820 aa).

The tat-type signal signal peptide spans 1-33; sequence MAITRRSFLKGVATTSAASVIGPSLLASASANA. Serine 179 is a binding site for Mo-bis(molybdopterin guanine dinucleotide).

The protein belongs to the prokaryotic molybdopterin-containing oxidoreductase family. It depends on Mo-bis(molybdopterin guanine dinucleotide) as a cofactor. Predicted to be exported by the Tat system. The position of the signal peptide cleavage has not been experimentally proven.

It localises to the periplasm. It carries out the reaction trimethylamine + 2 Fe(III)-[cytochrome c] + H2O = trimethylamine N-oxide + 2 Fe(II)-[cytochrome c] + 3 H(+). Functionally, reduces trimethylamine-N-oxide (TMAO) into trimethylamine; an anaerobic reaction coupled to energy-yielding reactions. This is Trimethylamine-N-oxide reductase (torA) from Vibrio vulnificus (strain CMCP6).